A 301-amino-acid chain; its full sequence is MVDEVDANSTGDNSLVNMKGFSFKEVLGSDSARKSAFILLDSSNGENAILLADKNAFPVDKTSWSAILTGSTLKPIMKNDIYSSYTLCMPNEFSDVKSTLIYPCNEKHIAKYRDQKRFIINETPEDYRTITLPYIQRNQMSLEWVYNILDHKAEVDRIIYEETDPHDGFILAPDLKWSGEQLECLYVQALVRRKGIKSIRDLTANDLPLLEGIRDKGLNAIKEKYGLDKHQIRAYFHYQPSFYHLHVHFIHVSYEAPASGVAKAVLLDDVINNLKLIPDFYQRSTLTFTAKEQDPIYRREN.

Residues glutamate 154, lysine 176, and 237 to 248 (HYQPSFYHLHVH) contribute to the substrate site. A Histidine triad motif motif is present at residues 244-248 (HLHVH). The active-site Nucleophile is the histidine 246.

The protein belongs to the HIT family.

Its subcellular location is the nucleus. The enzyme catalyses a 5'-end (N(7)-methyl 5'-triphosphoguanosine)-ribonucleoside in mRNA + H2O = N(7)-methyl-GMP + a 5'-end diphospho-ribonucleoside in mRNA + 2 H(+). It carries out the reaction a 5'-end (N(2),N(2),N(7)-trimethyl 5'-triphosphoguanosine)-ribonucleoside in mRNA + H2O = (N(2),N(2),N(7))-trimethyl-GMP + a 5'-end diphospho-ribonucleoside in mRNA + 2 H(+). Its activity is regulated as follows. The hydrolytic product 7-methylguanosine diphosphate (m7GDP) efficiently inhibits the decapping scavenger activity and acts as a competitive inhibitor in vitro. Its function is as follows. Decapping scavenger enzyme that catalyzes the cleavage of a residual cap structure following the degradation of mRNAs of the 3'-&gt;5' exosome-mediated mRNA decay pathway. Hydrolyzes cap analog structures like 7-methylguanosine nucleoside triphosphate (m7GpppG) and tri-methyl guanosine nucleoside triphosphate (m3(2,2,7)GpppG) with up to 2 nucleotide substrates (small capped oligoribonucleotides) and specifically releases 5'-phosphorylated RNA fragments and 7-methylguanosine monophosphate (m7GMP). Does not hydrolyze unmethylated cap analog (GpppG) and shows no decapping activity on intact m7GpppG-capped mRNA molecules. Does not hydrolyze 7-methylguanosine diphosphate (m7GDP) and tri-methylguanosine diphosphate (m3(2,2,7)GDP) to m(7)GMP and m3(2,2,7)GMP, respectively. May also play a role in the 5'-&gt;3 mRNA decay pathway; m7GDP, the downstream product released by the 5'-&gt;3' mRNA mediated decapping activity, may be also converted by dcs-1 to m7GMP. Binds to m7GpppG and strongly to m7GDP. This is m7GpppX diphosphatase from Ascaris suum (Pig roundworm).